The chain runs to 560 residues: Membrane protein insertase YidC (560 aa).

The next 6 membrane-spanning stretches (helical) occupy residues 5–25 (IINLIAAIILSLSIIFGWQYF), 334–354 (AIDFGWFYIITKPVFYAMNFF), 357–377 (YVGNFGVSILIVTVIIKLLMF), 431–451 (LPILVQIPVFFSIYKVLYVTI), 476–496 (LFGLLPFAPPSFLMIGAWPIL), and 522–542 (FMPLIFLFMFSSFPVGLLIYW).

It belongs to the OXA1/ALB3/YidC family. Type 1 subfamily. Interacts with the Sec translocase complex via SecD. Specifically interacts with transmembrane segments of nascent integral membrane proteins during membrane integration.

Its subcellular location is the cell inner membrane. In terms of biological role, required for the insertion and/or proper folding and/or complex formation of integral membrane proteins into the membrane. Involved in integration of membrane proteins that insert both dependently and independently of the Sec translocase complex, as well as at least some lipoproteins. Aids folding of multispanning membrane proteins. This is Membrane protein insertase YidC from Rickettsia rickettsii (strain Sheila Smith).